The sequence spans 364 residues: Ribosomal RNA large subunit methyltransferase M (364 aa).

S-adenosyl-L-methionine contacts are provided by residues S198, 231-234 (APGG), D250, D270, and D286. K315 functions as the Proton acceptor in the catalytic mechanism.

It belongs to the class I-like SAM-binding methyltransferase superfamily. RNA methyltransferase RlmE family. RlmM subfamily. In terms of assembly, monomer.

The protein localises to the cytoplasm. It carries out the reaction cytidine(2498) in 23S rRNA + S-adenosyl-L-methionine = 2'-O-methylcytidine(2498) in 23S rRNA + S-adenosyl-L-homocysteine + H(+). Catalyzes the 2'-O-methylation at nucleotide C2498 in 23S rRNA. In Thauera aminoaromatica, this protein is Ribosomal RNA large subunit methyltransferase M.